The sequence spans 81 residues: MAAVAAASAELLIIGWYIFRVLLQVFLECCIYWVGFAFRNPPGTQPIARSEVFRYSLQKLAYTVSRTGRHVLGERRQRAPN.

The protein belongs to the neuronatin family.

In terms of biological role, may participate in the maintenance of segment identity in the hindbrain and pituitary development, and maturation or maintenance of the overall structure of the nervous system. May function as a regulatory subunit of ion channels. The chain is Neuronatin (NNAT) from Sus scrofa (Pig).